The sequence spans 241 residues: Large ribosomal subunit protein uL3 (241 aa).

2 disordered regions span residues Val139–Gly164 and Asp215–Val241. The residue at position 151 (Gln151) is an N5-methylglutamine. The span at Ala225–Val241 shows a compositional bias: low complexity.

Belongs to the universal ribosomal protein uL3 family. Part of the 50S ribosomal subunit. Forms a cluster with proteins L14 and L19. In terms of processing, methylated by PrmB.

Functionally, one of the primary rRNA binding proteins, it binds directly near the 3'-end of the 23S rRNA, where it nucleates assembly of the 50S subunit. This is Large ribosomal subunit protein uL3 from Rhodopseudomonas palustris (strain HaA2).